The following is a 225-amino-acid chain: Ribonuclease 3 (225 aa).

Residues 7-129 form the RNase III domain; that stretch reads IPRLCRTLGY…IIGAIYLDSE (123 aa). E42 contacts Mg(2+). Residue D46 is part of the active site. Mg(2+) contacts are provided by D115 and E118. Residue E118 is part of the active site. Residues 155 to 225 enclose the DRBM domain; it reads DPKTLLQEHL…AAQVLELMKK (71 aa).

It belongs to the ribonuclease III family. As to quaternary structure, homodimer. The cofactor is Mg(2+).

It is found in the cytoplasm. The catalysed reaction is Endonucleolytic cleavage to 5'-phosphomonoester.. In terms of biological role, digests double-stranded RNA. Involved in the processing of primary rRNA transcript to yield the immediate precursors to the large and small rRNAs (23S and 16S). Processes some mRNAs, and tRNAs when they are encoded in the rRNA operon. Processes pre-crRNA and tracrRNA of type II CRISPR loci if present in the organism. The sequence is that of Ribonuclease 3 from Shewanella halifaxensis (strain HAW-EB4).